A 434-amino-acid polypeptide reads, in one-letter code: 5'-deoxyadenosine deaminase (434 aa).

The Zn(2+) site is built by histidine 63 and histidine 65. Residues glutamate 92 and histidine 184 each contribute to the substrate site. Histidine 211 provides a ligand contact to Zn(2+). Substrate-binding residues include glutamate 214 and aspartate 299. Position 299 (aspartate 299) interacts with Zn(2+).

The protein belongs to the metallo-dependent hydrolases superfamily. MTA/SAH deaminase family. In terms of assembly, homotetramer. The cofactor is Zn(2+).

The catalysed reaction is 5'-deoxyadenosine + H2O + H(+) = 5'-deoxyinosine + NH4(+). It carries out the reaction S-adenosyl-L-homocysteine + H2O + H(+) = S-inosyl-L-homocysteine + NH4(+). The enzyme catalyses S-methyl-5'-thioadenosine + H2O + H(+) = S-methyl-5'-thioinosine + NH4(+). It catalyses the reaction adenosine + H2O + H(+) = inosine + NH4(+). The protein operates within amino-acid biosynthesis; S-adenosyl-L-methionine biosynthesis. In terms of biological role, catalyzes the deamination of three SAM-derived enzymatic products, namely 5'-deoxyadenosine, S-adenosyl-L-homocysteine, and 5'-methylthioadenosine, to produce the inosine analogs. Can also deaminate adenosine. The preferred substrate for this enzyme is 5'-deoxyadenosine, but all these substrates are efficiently deaminated. Likely functions in a S-adenosyl-L-methionine (SAM) recycling pathway from S-adenosyl-L-homocysteine (SAH) produced from SAM-dependent methylation reactions. May also be involved in the recycling of 5'-deoxyadenosine, whereupon the 5'-deoxyribose moiety of 5'-deoxyinosine is further metabolized to deoxyhexoses used for the biosynthesis of aromatic amino acids in methanogens. The chain is 5'-deoxyadenosine deaminase from Methanococcoides burtonii (strain DSM 6242 / NBRC 107633 / OCM 468 / ACE-M).